We begin with the raw amino-acid sequence, 261 residues long: Small ribosomal subunit protein eS1 (261 aa).

A compositionally biased stretch (basic residues) spans 1–18 (MAVGKNKRISKGKKGGKK). A disordered region spans residues 1–23 (MAVGKNKRISKGKKGGKKKAADP).

It belongs to the eukaryotic ribosomal protein eS1 family. In terms of assembly, component of the small ribosomal subunit. Mature ribosomes consist of a small (40S) and a large (60S) subunit. The 40S subunit contains about 33 different proteins and 1 molecule of RNA (18S). The 60S subunit contains about 49 different proteins and 3 molecules of RNA (25S, 5.8S and 5S).

It localises to the cytoplasm. The sequence is that of Small ribosomal subunit protein eS1 (cyc07) from Nicotiana tabacum (Common tobacco).